Consider the following 350-residue polypeptide: Spermidine/putrescine import ATP-binding protein PotA (350 aa).

The region spanning 6-236 is the ABC transporter domain; it reads LELRNISKQY…PENLWTAQFI (231 aa). 38-45 lines the ATP pocket; the sequence is GPSGCGKT.

Belongs to the ABC transporter superfamily. Spermidine/putrescine importer (TC 3.A.1.11.1) family. As to quaternary structure, the complex is composed of two ATP-binding proteins (PotA), two transmembrane proteins (PotB and PotC) and a solute-binding protein (PotD).

Its subcellular location is the cell membrane. The catalysed reaction is ATP + H2O + polyamine-[polyamine-binding protein]Side 1 = ADP + phosphate + polyamineSide 2 + [polyamine-binding protein]Side 1.. Its function is as follows. Part of the ABC transporter complex PotABCD involved in spermidine/putrescine import. Responsible for energy coupling to the transport system. The chain is Spermidine/putrescine import ATP-binding protein PotA from Spiroplasma citri.